A 126-amino-acid polypeptide reads, in one-letter code: Putative lipoprotein LprD (126 aa).

The N-terminal stretch at 1 to 19 (MSTTRRRRPALVALVTIAA) is a signal peptide. A lipid anchor (N-palmitoyl cysteine) is attached at cysteine 20. Cysteine 20 is lipidated: S-diacylglycerol cysteine. Residues 44–64 (GYALQWPLFAGFCLYTYHNFV) form a helical membrane-spanning segment.

It to M.tuberculosis Rv1343c.

It localises to the cell membrane. The polypeptide is Putative lipoprotein LprD (lprD) (Mycobacterium leprae (strain TN)).